We begin with the raw amino-acid sequence, 159 residues long: Ribosome maturation factor RimP (159 aa).

Belongs to the RimP family.

The protein resides in the cytoplasm. Required for maturation of 30S ribosomal subunits. In Streptococcus pneumoniae (strain 70585), this protein is Ribosome maturation factor RimP.